The chain runs to 266 residues: Isopentenyl phosphate kinase (266 aa).

5–9 (KLGGS) is an ATP binding site. Alanine 47 is a substrate binding site. Glycine 48 contributes to the ATP binding site. 2 residues coordinate substrate: histidine 52 and glycine 157. ATP is bound by residues aspartate 178, 183 to 188 (YTRNPK), glycine 219, and lysine 223.

It belongs to the isopentenyl phosphate kinase family. In terms of assembly, homodimer.

It carries out the reaction isopentenyl phosphate + ATP = isopentenyl diphosphate + ADP. In terms of biological role, catalyzes the formation of isopentenyl diphosphate (IPP), the building block of all isoprenoids. Has lower activity with dimethylallyl phosphate (DMAP) and isopentenyl thiolophosphate (ISP). Has low activity with 1-butyl phosphate (BP) and 3-buten-1-yl phosphate (BEP). Has no significant activity with geranyl phosphate (in vitro). This chain is Isopentenyl phosphate kinase, found in Methanothermobacter thermautotrophicus (strain ATCC 29096 / DSM 1053 / JCM 10044 / NBRC 100330 / Delta H) (Methanobacterium thermoautotrophicum).